A 202-amino-acid chain; its full sequence is Small ribosomal subunit protein uS4c (202 aa).

Residues 90–165 form the S4 RNA-binding domain; sequence MRLDNILFRL…SQKYKIPNHL (76 aa).

This sequence belongs to the universal ribosomal protein uS4 family. Part of the 30S ribosomal subunit. Contacts protein S5. The interaction surface between S4 and S5 is involved in control of translational fidelity.

The protein localises to the plastid. It localises to the chloroplast. Functionally, one of the primary rRNA binding proteins, it binds directly to 16S rRNA where it nucleates assembly of the body of the 30S subunit. In terms of biological role, with S5 and S12 plays an important role in translational accuracy. This is Small ribosomal subunit protein uS4c (rps4) from Diphyscium foliosum (Nut-moss).